The primary structure comprises 168 residues: MAVLEILTAPDPRLRVQSKEVTDVAAVQTLIDDLLETLYETDNGVGLAAPQVGREEAIVVIDLSENRDEPLVLVNPKVVSGSNKEMGQEGCLSVPDYYADVERYTSVVVEALDRDGKPLRIETSEFLAIVMQHEIDHLSGNLFIDYLSPLKQQMAMKKVKKHNKLRAR.

2 residues coordinate Fe cation: Cys-91 and His-133. The active site involves Glu-134. His-137 is a binding site for Fe cation.

Belongs to the polypeptide deformylase family. Fe(2+) is required as a cofactor.

It catalyses the reaction N-terminal N-formyl-L-methionyl-[peptide] + H2O = N-terminal L-methionyl-[peptide] + formate. In terms of biological role, removes the formyl group from the N-terminal Met of newly synthesized proteins. Requires at least a dipeptide for an efficient rate of reaction. N-terminal L-methionine is a prerequisite for activity but the enzyme has broad specificity at other positions. In Vibrio vulnificus (strain CMCP6), this protein is Peptide deformylase 2.